The chain runs to 109 residues: MSKSKILVGDVVKVIAGSHKGELGPITWISKDKKWVSVQGINSLKHVKPSQTDSEGGIKEVPSKINLSNVALQDPKNKDGISKVGYQIEDGKKVRIAKKSNSPLKKASK.

It belongs to the universal ribosomal protein uL24 family. As to quaternary structure, part of the 50S ribosomal subunit.

One of two assembly initiator proteins, it binds directly to the 5'-end of the 23S rRNA, where it nucleates assembly of the 50S subunit. Functionally, one of the proteins that surrounds the polypeptide exit tunnel on the outside of the subunit. This is Large ribosomal subunit protein uL24 from Mesoplasma florum (strain ATCC 33453 / NBRC 100688 / NCTC 11704 / L1) (Acholeplasma florum).